The sequence spans 266 residues: Inositol-1-monophosphatase (266 aa).

Positions 69, 86, 88, and 89 each coordinate Mg(2+). Substrate is bound at residue E69. Residues 88 to 91 (LDGT), R185, and D214 contribute to the substrate site. D214 is a binding site for Mg(2+).

It belongs to the inositol monophosphatase superfamily. Mg(2+) is required as a cofactor.

The catalysed reaction is a myo-inositol phosphate + H2O = myo-inositol + phosphate. The protein is Inositol-1-monophosphatase (suhB) of Mesorhizobium japonicum (strain LMG 29417 / CECT 9101 / MAFF 303099) (Mesorhizobium loti (strain MAFF 303099)).